We begin with the raw amino-acid sequence, 589 residues long: Mitoguardin 2 (589 aa).

The next 2 helical transmembrane spans lie at Ile-11–Gly-31 and Pro-42–Ala-62. Residues Val-87–Ser-134 form a disordered region. 2 stretches are compositionally biased toward low complexity: residues Arg-106–Ser-116 and Ile-123–Ser-134.

It belongs to the mitoguardin family. In terms of assembly, homodimer and heterodimer; forms heterodimers with miga1.

The protein localises to the mitochondrion outer membrane. Its function is as follows. Regulator of mitochondrial fusion: acts by forming homo- and heterodimers at the mitochondrial outer membrane and facilitating the formation of pld6/MitoPLD dimers. May act by regulating phospholipid metabolism via pld6/MitoPLD. The chain is Mitoguardin 2 from Xenopus laevis (African clawed frog).